Consider the following 533-residue polypeptide: Probable intron-encoded endonuclease 3 (533 aa).

3 helical membrane-spanning segments follow: residues 1-21 (MYLS…FFGR), 30-50 (LITC…FFEV), and 81-101 (LTVA…IYSI). The tract at residues 1–108 (MYLSIIILPL…YSISYMSHDP (108 aa)) is ndh-5 exon 1 encoded. The segment at 109 to 533 (RGRVRGKRVY…SISLLLGRRR (425 aa)) is ndh-5 intron 1 encoded.

In the N-terminal section; belongs to the complex I subunit 5 family. This sequence in the C-terminal section; belongs to the LAGLIDADG endonuclease family.

Its subcellular location is the mitochondrion membrane. Functionally, mitochondrial DNA endonuclease involved in intron homing. This chain is Probable intron-encoded endonuclease 3, found in Neurospora crassa (strain ATCC 24698 / 74-OR23-1A / CBS 708.71 / DSM 1257 / FGSC 987).